A 363-amino-acid polypeptide reads, in one-letter code: tRNA(Met) cytidine acetate ligase (363 aa).

ATP-binding positions include 7–20 (IAEF…HKYL), G96, N152, and R175.

It belongs to the TmcAL family.

The protein localises to the cytoplasm. The enzyme catalyses cytidine(34) in elongator tRNA(Met) + acetate + ATP = N(4)-acetylcytidine(34) in elongator tRNA(Met) + AMP + diphosphate. Its function is as follows. Catalyzes the formation of N(4)-acetylcytidine (ac(4)C) at the wobble position of elongator tRNA(Met), using acetate and ATP as substrates. First activates an acetate ion to form acetyladenylate (Ac-AMP) and then transfers the acetyl group to tRNA to form ac(4)C34. The sequence is that of tRNA(Met) cytidine acetate ligase from Streptococcus thermophilus (strain ATCC BAA-250 / LMG 18311).